Here is a 218-residue protein sequence, read N- to C-terminus: uncharacterized protein (218 aa).

A CN hydrolase domain is found at 4 to 207 (WKVAAAQYEP…SLLLVGQRSS (204 aa)).

This is an uncharacterized protein from Escherichia coli (strain K12).